We begin with the raw amino-acid sequence, 213 residues long: Glutathione S-transferase DHAR1, mitochondrial (213 aa).

Positions 8 and 19 each coordinate glutathione. Lys8 and Asp19 together coordinate L-ascorbate. The GST N-terminal domain occupies Ala10–Lys83. Cys20 (nucleophile) is an active-site residue. Cys20 bears the S-glutathionyl cysteine mark. The Glutathione-binding signature appears at Cys20–Arg25. 3 residues coordinate glutathione: Lys47, Val60, and Ser73. The 130-residue stretch at Tyr84–Pro213 folds into the GST C-terminal domain. Residues His133 to His137 carry the Copper-binding motif. Positions 160 and 207 each coordinate glutathione. An L-ascorbate-binding site is contributed by Lys210.

Belongs to the GST superfamily. DHAR family. In terms of assembly, monomer. Interacts with copper (Cu). In terms of processing, spontaneous S-glutathionylation in the presence of oxidized glutathione (GSSG). Expressed at least in roots and leaves.

Its subcellular location is the mitochondrion. The protein resides in the cytoplasm. It is found in the cytosol. The protein localises to the peroxisome. It localises to the membrane. It catalyses the reaction RX + glutathione = an S-substituted glutathione + a halide anion + H(+). The catalysed reaction is L-dehydroascorbate + 2 glutathione = glutathione disulfide + L-ascorbate. In terms of biological role, displays a dual function. As a soluble protein, exhibits glutathione-dependent thiol transferase and dehydroascorbate (DHA) reductase activities. Key component of the ascorbate recycling system. Involved in the redox homeostasis, especially in scavenging of ROS under oxidative stresses, subsequently to biotic or abiotic inducers. As a peripheral membrane protein, could also function as voltage-gated ion channel. The polypeptide is Glutathione S-transferase DHAR1, mitochondrial (Arabidopsis thaliana (Mouse-ear cress)).